The chain runs to 904 residues: Translation initiation factor IF-2 (904 aa).

Disordered stretches follow at residues 103–122 (YVKSENEGSGRAAPMTPDEE), 137–252 (NLEE…MVAG), and 267–315 (HLSA…FERP). Positions 137 to 177 (NLEEQQRLAESDRVRDEAIQRKREEEQAAKDRAEAERKAAE) are enriched in basic and acidic residues. Low complexity-rich tracts occupy residues 178-230 (EAAA…AAPA) and 280-293 (RGKPTGRPGSSSSR). The region spanning 403 to 572 (SRPPVVTIMG…SLQAEVLELK (170 aa)) is the tr-type G domain. Residues 412 to 419 (GHVDHGKT) form a G1 region. GTP is bound at residue 412–419 (GHVDHGKT). A G2 region spans residues 437–441 (GITQH). The tract at residues 458-461 (DTPG) is G3. Residues 458-462 (DTPGH) and 512-515 (NKID) each bind GTP. The interval 512–515 (NKID) is G4. A G5 region spans residues 548-550 (SAK).

It belongs to the TRAFAC class translation factor GTPase superfamily. Classic translation factor GTPase family. IF-2 subfamily.

The protein resides in the cytoplasm. In terms of biological role, one of the essential components for the initiation of protein synthesis. Protects formylmethionyl-tRNA from spontaneous hydrolysis and promotes its binding to the 30S ribosomal subunits. Also involved in the hydrolysis of GTP during the formation of the 70S ribosomal complex. The polypeptide is Translation initiation factor IF-2 (Xanthomonas euvesicatoria pv. vesicatoria (strain 85-10) (Xanthomonas campestris pv. vesicatoria)).